The primary structure comprises 368 residues: ICEBs1 integrase (368 aa).

Residues 61–143 (VSFPTLISIY…SLSKIFDTAV (83 aa)) form the Core-binding (CB) domain. Positions 164–362 (KKMKFWRPEE…YPNKQKEMAD (199 aa)) constitute a Tyr recombinase domain. Active-site residues include R201, K239, H313, R316, and H339. The active-site O-(3'-phospho-DNA)-tyrosine intermediate is Y349.

This sequence belongs to the 'phage' integrase family.

Putative integrase that is involved in the insertion of the integrative and conjugative element ICEBs1. Required for the excision of ICEBs1 from the donor cell genome and subsequent integration in the recipient cell genome. Appears not to be transferred through the mating pore. Integration of ICEBs1 involves an attachment site in the chromosome, attB, and a site in the circular form of ICEBs1, attICEBs1. This is ICEBs1 integrase (int) from Bacillus subtilis (strain 168).